A 727-amino-acid polypeptide reads, in one-letter code: Sodium-dependent neutral amino acid transporter SLC6A17 (727 aa).

Residues 1-69 (MPKNSKVTQR…RPAWNSKLQY (69 aa)) are Cytoplasmic-facing. Phosphoserine is present on residues serine 13 and serine 20. The chain crosses the membrane as a helical span at residues 70-90 (ILAQIGFSVGLGNIWRFPYLC). At 91–95 (QKNGG) the chain is on the extracellular side. The chain crosses the membrane as a helical span at residues 96-116 (GAYLVPYLVLLIIIGIPLFFL). The Cytoplasmic segment spans residues 117-147 (ELAVGQRIRRGSIGVWHYICPRLGGIGFSSC). A helical membrane pass occupies residues 148-168 (IVCLFVGLYYNVIIGWSIFYF). Residues 169–222 (FKSFQYPLPWSECPVVRNGSVAVVEAECEKSSATTYFWYREALDISDSISESGG) lie on the Extracellular side of the membrane. An N-linked (GlcNAc...) asparagine glycan is attached at asparagine 186. The helical transmembrane segment at 223 to 243 (LNWKMTLCLLVAWSIVGMAVV) threads the bilayer. Residues 244 to 253 (KGIQSSGKVM) lie on the Cytoplasmic side of the membrane. The helical transmembrane segment at 254-274 (YFSSLFPYVVLACFLVRGLLL) threads the bilayer. Residues 275–300 (RGAVDGILHMFTPKLDKMLDPQVWRE) are Extracellular-facing. The chain crosses the membrane as a helical span at residues 301–321 (AATQVFFALGLGFGGVIAFSS). Over 322-334 (YNKQDNNCHFDAA) the chain is Cytoplasmic. Residues 335-355 (LVSFINFFTSVLATLVVFAVL) traverse the membrane as a helical segment. The Extracellular segment spans residues 356–460 (GFKANIMNEK…HFPASPFWSV (105 aa)). Residue tyrosine 377 is modified to Phosphotyrosine. N-linked (GlcNAc...) asparagine glycosylation occurs at asparagine 393. Residues 461 to 481 (MFFLMLINLGLGSMIGTMAGI) form a helical membrane-spanning segment. Topologically, residues 482–490 (TTPIIDTFK) are cytoplasmic. The helical transmembrane segment at 491-511 (VPKEMFTVGCCVFAFLVGLLF) threads the bilayer. At 512 to 527 (VQRSGNYFVTMFDDYS) the chain is on the extracellular side. Residues 528 to 548 (ATLPLTLIVILENIAVAWIYG) form a helical membrane-spanning segment. The Cytoplasmic portion of the chain corresponds to 549–573 (TKKFMQELTEMLGFRPYRFYFYMWK). The helical transmembrane segment at 574 to 594 (FVSPLCMAVLTTASIIQLGVT) threads the bilayer. Residues 595 to 617 (PPGYSAWIKEEAAERYLYFPNWA) lie on the Extracellular side of the membrane. A helical membrane pass occupies residues 618–638 (MALLITLIVVATLPIPVVFVL). Residues 639–727 (RHFHLLSDGS…LLASTPESEL (89 aa)) are Cytoplasmic-facing. Serine 665 and serine 701 each carry phosphoserine. The interval 680-727 (VPSEAPSPMPTHRSYLGPGSTSPLETSGNPNGRYGSGYLLASTPESEL) is disordered. Over residues 698 to 709 (GSTSPLETSGNP) the composition is skewed to polar residues.

This sequence belongs to the sodium:neurotransmitter symporter (SNF) (TC 2.A.22) family.

It localises to the cytoplasmic vesicle. The protein localises to the secretory vesicle. It is found in the synaptic vesicle membrane. The protein resides in the postsynapse. Its subcellular location is the presynapse. The catalysed reaction is L-proline(in) + Na(+)(in) = L-proline(out) + Na(+)(out). It catalyses the reaction L-leucine(in) + Na(+)(in) = L-leucine(out) + Na(+)(out). It carries out the reaction glycine(in) + Na(+)(in) = glycine(out) + Na(+)(out). The enzyme catalyses L-alanine(in) + Na(+)(in) = L-alanine(out) + Na(+)(out). The catalysed reaction is L-glutamine(in) + Na(+)(in) = L-glutamine(out) + Na(+)(out). Functionally, synaptic vesicle transporter with apparent selectivity for neutral amino acids. The transport is sodium-coupled but chloride-independent, likely driven by the proton electrochemical gradient generated by vacuolar H(+)-ATPase in an overall electrogenic mechanism. May contribute to the synaptic uptake of neurotransmitter precursors in a process coupled in part to vesicle exocytosis. This Homo sapiens (Human) protein is Sodium-dependent neutral amino acid transporter SLC6A17.